The following is a 600-amino-acid chain: Proline--tRNA ligase (600 aa).

This sequence belongs to the class-II aminoacyl-tRNA synthetase family. ProS type 1 subfamily. In terms of assembly, homodimer.

The protein localises to the cytoplasm. It catalyses the reaction tRNA(Pro) + L-proline + ATP = L-prolyl-tRNA(Pro) + AMP + diphosphate. Its function is as follows. Catalyzes the attachment of proline to tRNA(Pro) in a two-step reaction: proline is first activated by ATP to form Pro-AMP and then transferred to the acceptor end of tRNA(Pro). As ProRS can inadvertently accommodate and process non-cognate amino acids such as alanine and cysteine, to avoid such errors it has two additional distinct editing activities against alanine. One activity is designated as 'pretransfer' editing and involves the tRNA(Pro)-independent hydrolysis of activated Ala-AMP. The other activity is designated 'posttransfer' editing and involves deacylation of mischarged Ala-tRNA(Pro). The misacylated Cys-tRNA(Pro) is not edited by ProRS. The chain is Proline--tRNA ligase from Prochlorococcus marinus (strain MIT 9312).